A 179-amino-acid polypeptide reads, in one-letter code: Bifunctional protein PyrR (179 aa).

The PRPP-binding motif lies at 99–111 (VILVDDVLYTGRT).

This sequence belongs to the purine/pyrimidine phosphoribosyltransferase family. PyrR subfamily. In terms of assembly, homodimer and homohexamer; in equilibrium.

The catalysed reaction is UMP + diphosphate = 5-phospho-alpha-D-ribose 1-diphosphate + uracil. Its function is as follows. Regulates transcriptional attenuation of the pyrimidine nucleotide (pyr) operon by binding in a uridine-dependent manner to specific sites on pyr mRNA. This disrupts an antiterminator hairpin in the RNA and favors formation of a downstream transcription terminator, leading to a reduced expression of downstream genes. Functionally, also displays a weak uracil phosphoribosyltransferase activity which is not physiologically significant. This chain is Bifunctional protein PyrR, found in Brevibacillus brevis (strain 47 / JCM 6285 / NBRC 100599).